We begin with the raw amino-acid sequence, 488 residues long: Probable (S)-N-methylcoclaurine 3'-hydroxylase isozyme 2 (488 aa).

The helical transmembrane segment at 2–21 threads the bilayer; sequence EVLSIAIVSFSFLLFLFFIL. Cys427 serves as a coordination point for heme.

This sequence belongs to the cytochrome P450 family. Heme is required as a cofactor. In terms of tissue distribution, expressed at low levels in roots.

The protein resides in the endoplasmic reticulum membrane. The protein localises to the microsome membrane. It catalyses the reaction (S)-N-methylcoclaurine + reduced [NADPH--hemoprotein reductase] + O2 = (S)-3'-hydroxy-N-methylcoclaurine + oxidized [NADPH--hemoprotein reductase] + H2O + H(+). The protein operates within alkaloid biosynthesis; (S)-reticuline biosynthesis; (S)-reticuline from (S)-norcoclaurine: step 3/4. Functionally, 3'-hydroxylation of (S)-N-methylcoclaurine. This is Probable (S)-N-methylcoclaurine 3'-hydroxylase isozyme 2 (CYP80B2) from Coptis japonica (Japanese goldthread).